Consider the following 75-residue polypeptide: Small ribosomal subunit protein bS18 (75 aa).

It belongs to the bacterial ribosomal protein bS18 family. Part of the 30S ribosomal subunit. Forms a tight heterodimer with protein bS6.

Binds as a heterodimer with protein bS6 to the central domain of the 16S rRNA, where it helps stabilize the platform of the 30S subunit. The chain is Small ribosomal subunit protein bS18 from Thermotoga maritima (strain ATCC 43589 / DSM 3109 / JCM 10099 / NBRC 100826 / MSB8).